The chain runs to 775 residues: Endothelin-converting enzyme-like 1 (775 aa).

Residues 1 to 59 (MEPPYSLTAHYDEFQEVKYVSRCGAGGARGASLPPGFPLGAARSATGARSGLPRWNRRE) are Cytoplasmic-facing. A helical; Signal-anchor for type II membrane protein membrane pass occupies residues 60 to 82 (VCLLSGLVFAAGLCAILAAMLAL). Residues 83–775 (KYLGPVAAGG…MNPAHKCSVW (693 aa)) lie on the Lumenal side of the membrane. The region spanning 98-775 (GCPERKAFAR…MNPAHKCSVW (678 aa)) is the Peptidase M13 domain. Disulfide bonds link Cys-123/Cys-760, Cys-131/Cys-720, Cys-187/Cys-441, and Cys-649/Cys-772. 2 N-linked (GlcNAc...) asparagine glycosylation sites follow: Asn-255 and Asn-322. Zn(2+) is bound at residue His-612. Residue Glu-613 is part of the active site. A Zn(2+)-binding site is contributed by His-616. Asn-656 is a glycosylation site (N-linked (GlcNAc...) asparagine). Glu-672 provides a ligand contact to Zn(2+). The Proton donor role is filled by Asp-676.

The protein belongs to the peptidase M13 family. Requires Zn(2+) as cofactor. Post-translationally, N-glycosylated. Highly expressed in the CNS, in particular in putamen, spinal cord, medulla and subthalamic nucleus. A strong signal was also detected in uterine subepithelial cells and around renal blood vessels. Detected at lower levels in amygdala, caudate, thalamus, pancreas and skeletal muscle. Detected at very low levels in substantia nigra, cerebellum, cortex, corpus callosum and hippocampus.

It is found in the membrane. Its function is as follows. May contribute to the degradation of peptide hormones and be involved in the inactivation of neuronal peptides. The chain is Endothelin-converting enzyme-like 1 (ECEL1) from Homo sapiens (Human).